The chain runs to 475 residues: Cobyric acid synthase (475 aa).

Residues 244–431 (KLNVVVPVLT…LHGFFDEADV (188 aa)) form the GATase cobBQ-type domain. The active-site Nucleophile is C325. H423 is a catalytic residue.

This sequence belongs to the CobB/CobQ family. CobQ subfamily.

The protein operates within cofactor biosynthesis; adenosylcobalamin biosynthesis. Its function is as follows. Catalyzes amidations at positions B, D, E, and G on adenosylcobyrinic A,C-diamide. NH(2) groups are provided by glutamine, and one molecule of ATP is hydrogenolyzed for each amidation. The sequence is that of Cobyric acid synthase from Vibrio campbellii (strain ATCC BAA-1116).